The primary structure comprises 848 residues: Trimethylamine-N-oxide reductase 1 (848 aa).

A signal peptide (tat-type signal) is located at residues 1-39 (MNNNDLFQASRRRFLAQLGGLTVAGMLGPSLLTPRRATA). Residue serine 191 participates in Mo-bis(molybdopterin guanine dinucleotide) binding.

This sequence belongs to the prokaryotic molybdopterin-containing oxidoreductase family. In terms of assembly, interacts with the N-terminal domain of TorC. Mo-bis(molybdopterin guanine dinucleotide) is required as a cofactor. Exported by the Tat system. The position of the signal peptide cleavage has been experimentally proven.

It is found in the periplasm. The enzyme catalyses trimethylamine + 2 Fe(III)-[cytochrome c] + H2O = trimethylamine N-oxide + 2 Fe(II)-[cytochrome c] + 3 H(+). Its function is as follows. Reduces trimethylamine-N-oxide (TMAO) into trimethylamine; an anaerobic reaction coupled to energy-yielding reactions. This chain is Trimethylamine-N-oxide reductase 1 (torA), found in Escherichia coli (strain K12).